A 264-amino-acid chain; its full sequence is tRNA pseudouridine synthase A (264 aa).

Asp-51 functions as the Nucleophile in the catalytic mechanism. A substrate-binding site is contributed by Tyr-109.

This sequence belongs to the tRNA pseudouridine synthase TruA family. In terms of assembly, homodimer.

It catalyses the reaction uridine(38/39/40) in tRNA = pseudouridine(38/39/40) in tRNA. Its function is as follows. Formation of pseudouridine at positions 38, 39 and 40 in the anticodon stem and loop of transfer RNAs. This chain is tRNA pseudouridine synthase A, found in Staphylococcus aureus (strain MRSA252).